The chain runs to 133 residues: Large ribosomal subunit protein uL22 (133 aa).

The protein belongs to the universal ribosomal protein uL22 family. Part of the 50S ribosomal subunit.

Functionally, this protein binds specifically to 23S rRNA; its binding is stimulated by other ribosomal proteins, e.g. L4, L17, and L20. It is important during the early stages of 50S assembly. It makes multiple contacts with different domains of the 23S rRNA in the assembled 50S subunit and ribosome. Its function is as follows. The globular domain of the protein is located near the polypeptide exit tunnel on the outside of the subunit, while an extended beta-hairpin is found that lines the wall of the exit tunnel in the center of the 70S ribosome. This is Large ribosomal subunit protein uL22 from Granulibacter bethesdensis (strain ATCC BAA-1260 / CGDNIH1).